The sequence spans 720 residues: Catalase-peroxidase (720 aa).

Positions 1–21 are cleaved as a signal peptide; sequence MSENKCPVMHGSATTTENSMA. Residues 94–222 constitute a cross-link (tryptophyl-tyrosyl-methioninium (Trp-Tyr) (with M-248)); the sequence is WHAAGTYRIA…LAAVMMGLIY (129 aa). Catalysis depends on histidine 95, which acts as the Proton acceptor. Positions 222–248 form a cross-link, tryptophyl-tyrosyl-methioninium (Tyr-Met) (with W-94); sequence YVNPEGVDGKPDPLKTAQDIRETFARM. Histidine 263 provides a ligand contact to heme b.

It belongs to the peroxidase family. Peroxidase/catalase subfamily. Homodimer or homotetramer. Requires heme b as cofactor. Post-translationally, formation of the three residue Trp-Tyr-Met cross-link is important for the catalase, but not the peroxidase activity of the enzyme.

It catalyses the reaction H2O2 + AH2 = A + 2 H2O. The enzyme catalyses 2 H2O2 = O2 + 2 H2O. In terms of biological role, bifunctional enzyme with both catalase and broad-spectrum peroxidase activity. The protein is Catalase-peroxidase of Shewanella denitrificans (strain OS217 / ATCC BAA-1090 / DSM 15013).